The chain runs to 221 residues: NAD(P)H-hydrate epimerase (221 aa).

Positions 10–210 (MQQIDNYTIE…DVGMLIPDDF (201 aa)) constitute a YjeF N-terminal domain. 58-62 (NNGAD) is a binding site for (6S)-NADPHX. Residues Asn-59 and Asp-120 each coordinate K(+). Residues 124-130 (GVGLNNV) and Asp-153 each bind (6S)-NADPHX. Thr-156 contributes to the K(+) binding site.

It belongs to the NnrE/AIBP family. K(+) serves as cofactor.

The catalysed reaction is (6R)-NADHX = (6S)-NADHX. The enzyme catalyses (6R)-NADPHX = (6S)-NADPHX. Its function is as follows. Catalyzes the epimerization of the S- and R-forms of NAD(P)HX, a damaged form of NAD(P)H that is a result of enzymatic or heat-dependent hydration. This is a prerequisite for the S-specific NAD(P)H-hydrate dehydratase to allow the repair of both epimers of NAD(P)HX. This is NAD(P)H-hydrate epimerase from Leuconostoc mesenteroides subsp. mesenteroides (strain ATCC 8293 / DSM 20343 / BCRC 11652 / CCM 1803 / JCM 6124 / NCDO 523 / NBRC 100496 / NCIMB 8023 / NCTC 12954 / NRRL B-1118 / 37Y).